A 216-amino-acid polypeptide reads, in one-letter code: Sperm microtubule inner protein 8 (216 aa).

As to quaternary structure, microtubule inner protein component of sperm flagellar doublet microtubules. Expressed in testis, prostate and placenta.

It is found in the cytoplasm. The protein resides in the cytoskeleton. The protein localises to the flagellum axoneme. In terms of biological role, microtubule inner protein (MIP) part of the dynein-decorated doublet microtubules (DMTs) in flagellum axoneme. May serve to reinforce and thus stabilize the microtubule structure in the sperm flagella. This Homo sapiens (Human) protein is Sperm microtubule inner protein 8.